A 276-amino-acid polypeptide reads, in one-letter code: MAD2L1-binding protein (276 aa).

The segment covering 1–10 (MAASGEEDMS) has biased composition (acidic residues). A disordered region spans residues 1–30 (MAASGEEDMSELSPAAAPNLDWYEKPEETH). The segment at 49–81 (PAEPFCPRDLVPVVFPGPVSQEDCCQFTCELLK) is interaction with MAD2L1.

Belongs to the MAD2L1BP family. Interacts with MAD2L1.

Its subcellular location is the nucleus. The protein resides in the nucleoplasm. It is found in the cytoplasm. It localises to the cytoskeleton. The protein localises to the spindle. May function to silence the spindle checkpoint and allow mitosis to proceed through anaphase by binding MAD2L1 after it has become dissociated from the MAD2L1-CDC20 complex. The protein is MAD2L1-binding protein (Mad2l1bp) of Mus musculus (Mouse).